We begin with the raw amino-acid sequence, 150 residues long: D-aminoacyl-tRNA deacylase (150 aa).

A Gly-cisPro motif, important for rejection of L-amino acids motif is present at residues 138–139 (GP).

The protein belongs to the DTD family. As to quaternary structure, homodimer.

The protein resides in the cytoplasm. It carries out the reaction glycyl-tRNA(Ala) + H2O = tRNA(Ala) + glycine + H(+). The catalysed reaction is a D-aminoacyl-tRNA + H2O = a tRNA + a D-alpha-amino acid + H(+). Its function is as follows. An aminoacyl-tRNA editing enzyme that deacylates mischarged D-aminoacyl-tRNAs. Also deacylates mischarged glycyl-tRNA(Ala), protecting cells against glycine mischarging by AlaRS. Acts via tRNA-based rather than protein-based catalysis; rejects L-amino acids rather than detecting D-amino acids in the active site. By recycling D-aminoacyl-tRNA to D-amino acids and free tRNA molecules, this enzyme counteracts the toxicity associated with the formation of D-aminoacyl-tRNA entities in vivo and helps enforce protein L-homochirality. This chain is D-aminoacyl-tRNA deacylase, found in Bacteroides fragilis (strain YCH46).